We begin with the raw amino-acid sequence, 332 residues long: Azadirone synthase LFS (332 aa).

Residues 181–286 form the Fe2OG dioxygenase domain; it reads ANANYTNMFH…RYSTGTFICP (106 aa). Fe cation contacts are provided by His-208, Asp-210, and His-269. Arg-277 provides a ligand contact to 2-oxoglutarate.

It belongs to the iron/ascorbate-dependent oxidoreductase family. It depends on Fe(2+) as a cofactor. Mainly expressed in petioles and, to a lower extent, in roots.

The catalysed reaction is (1S,3bR,4R,5aR,9aR,9bR,11aS)-1-(1-hydroxy-4-oxobutan-2-yl)-3b,6,6,9a,11a-pentamethyl-7-oxo-1H,2H,3bH,4H,5H,5aH,6H,7H,9aH,9bH,10H,11H,11aH-cyclopenta[a]phenanthren-4-yl acetate + 2-oxoglutarate + O2 = azadirone + succinate + CO2 + 2 H2O. Its pathway is secondary metabolite biosynthesis; terpenoid biosynthesis. 2-oxoglutarate-Fe(II) type oxidoreductase involved in the biosynthesis of limonoids triterpene natural products such as azadirachtin, an antifeedant widely used as bioinsecticide, and possessing many medicinal applications including anti-tumoral, anti-malarial, anti-rheumatic, antibacterial, anti-inflammatory, anti-pyretic and diuretic effects. Catalyzes the formation of azadirone. The sequence is that of Azadirone synthase LFS from Melia azedarach (Chinaberry tree).